The following is a 437-amino-acid chain: Glutamyl-tRNA reductase (437 aa).

Residues 49 to 52 (TCNR), Ser109, 114 to 116 (ETQ), and Gln120 each bind substrate. Cys50 serves as the catalytic Nucleophile. 189–194 (GAGKMS) serves as a coordination point for NADP(+).

Belongs to the glutamyl-tRNA reductase family. In terms of assembly, homodimer.

The enzyme catalyses (S)-4-amino-5-oxopentanoate + tRNA(Glu) + NADP(+) = L-glutamyl-tRNA(Glu) + NADPH + H(+). Its pathway is porphyrin-containing compound metabolism; protoporphyrin-IX biosynthesis; 5-aminolevulinate from L-glutamyl-tRNA(Glu): step 1/2. Its function is as follows. Catalyzes the NADPH-dependent reduction of glutamyl-tRNA(Glu) to glutamate 1-semialdehyde (GSA). The polypeptide is Glutamyl-tRNA reductase (Paenibacillus macerans (Bacillus macerans)).